The following is a 461-amino-acid chain: Bifunctional protein GlmU (461 aa).

Residues 1–236 (MNVLLQELFI…VFEIFGINNR (236 aa)) are pyrophosphorylase. UDP-N-acetyl-alpha-D-glucosamine-binding positions include K27, Q80, 85 to 86 (GT), 109 to 111 (YGD), G146, E160, N175, and N234. D111 provides a ligand contact to Mg(2+). Residue N234 participates in Mg(2+) binding. The interval 237–257 (FQLMKLEKIYQIEQAKKLLLN) is linker. An N-acetyltransferase region spans residues 258–461 (GVTLSDYNRF…SILRKENNSK (204 aa)). Residue K358 participates in UDP-N-acetyl-alpha-D-glucosamine binding. H370 serves as the catalytic Proton acceptor. Y373 and N384 together coordinate UDP-N-acetyl-alpha-D-glucosamine. Acetyl-CoA is bound by residues A387, A430, and R447.

It in the N-terminal section; belongs to the N-acetylglucosamine-1-phosphate uridyltransferase family. This sequence in the C-terminal section; belongs to the transferase hexapeptide repeat family. In terms of assembly, homotrimer. The cofactor is Mg(2+).

Its subcellular location is the cytoplasm. It carries out the reaction alpha-D-glucosamine 1-phosphate + acetyl-CoA = N-acetyl-alpha-D-glucosamine 1-phosphate + CoA + H(+). It catalyses the reaction N-acetyl-alpha-D-glucosamine 1-phosphate + UTP + H(+) = UDP-N-acetyl-alpha-D-glucosamine + diphosphate. It functions in the pathway nucleotide-sugar biosynthesis; UDP-N-acetyl-alpha-D-glucosamine biosynthesis; N-acetyl-alpha-D-glucosamine 1-phosphate from alpha-D-glucosamine 6-phosphate (route II): step 2/2. Its pathway is nucleotide-sugar biosynthesis; UDP-N-acetyl-alpha-D-glucosamine biosynthesis; UDP-N-acetyl-alpha-D-glucosamine from N-acetyl-alpha-D-glucosamine 1-phosphate: step 1/1. The protein operates within bacterial outer membrane biogenesis; LPS lipid A biosynthesis. Catalyzes the last two sequential reactions in the de novo biosynthetic pathway for UDP-N-acetylglucosamine (UDP-GlcNAc). The C-terminal domain catalyzes the transfer of acetyl group from acetyl coenzyme A to glucosamine-1-phosphate (GlcN-1-P) to produce N-acetylglucosamine-1-phosphate (GlcNAc-1-P), which is converted into UDP-GlcNAc by the transfer of uridine 5-monophosphate (from uridine 5-triphosphate), a reaction catalyzed by the N-terminal domain. This chain is Bifunctional protein GlmU, found in Wigglesworthia glossinidia brevipalpis.